The primary structure comprises 398 residues: Succinate--CoA ligase [ADP-forming] subunit beta (398 aa).

In terms of domain architecture, ATP-grasp spans 9-254 (KALLGEFGVP…ETEEDAKEIE (246 aa)). Residues lysine 46, 53 to 55 (GRG), glutamate 109, serine 112, and glutamate 117 contribute to the ATP site. Positions 209 and 223 each coordinate Mg(2+). Residues asparagine 274 and 331-333 (GIM) contribute to the substrate site.

Belongs to the succinate/malate CoA ligase beta subunit family. In terms of assembly, heterotetramer of two alpha and two beta subunits. Mg(2+) serves as cofactor.

The catalysed reaction is succinate + ATP + CoA = succinyl-CoA + ADP + phosphate. It catalyses the reaction GTP + succinate + CoA = succinyl-CoA + GDP + phosphate. The protein operates within carbohydrate metabolism; tricarboxylic acid cycle; succinate from succinyl-CoA (ligase route): step 1/1. Its function is as follows. Succinyl-CoA synthetase functions in the citric acid cycle (TCA), coupling the hydrolysis of succinyl-CoA to the synthesis of either ATP or GTP and thus represents the only step of substrate-level phosphorylation in the TCA. The beta subunit provides nucleotide specificity of the enzyme and binds the substrate succinate, while the binding sites for coenzyme A and phosphate are found in the alpha subunit. The polypeptide is Succinate--CoA ligase [ADP-forming] subunit beta (Bradyrhizobium diazoefficiens (strain JCM 10833 / BCRC 13528 / IAM 13628 / NBRC 14792 / USDA 110)).